The following is a 408-amino-acid chain: Imidazolonepropionase (408 aa).

Fe(3+) is bound by residues histidine 73 and histidine 75. Positions 73 and 75 each coordinate Zn(2+). The 4-imidazolone-5-propanoate site is built by arginine 82, tyrosine 145, and histidine 178. Position 145 (tyrosine 145) interacts with N-formimidoyl-L-glutamate. Residue histidine 243 coordinates Fe(3+). Histidine 243 provides a ligand contact to Zn(2+). Residue glutamine 246 coordinates 4-imidazolone-5-propanoate. Aspartate 318 provides a ligand contact to Fe(3+). Zn(2+) is bound at residue aspartate 318. Asparagine 320 and glycine 322 together coordinate N-formimidoyl-L-glutamate. A 4-imidazolone-5-propanoate-binding site is contributed by serine 323.

Belongs to the metallo-dependent hydrolases superfamily. HutI family. Requires Zn(2+) as cofactor. The cofactor is Fe(3+).

It localises to the cytoplasm. It catalyses the reaction 4-imidazolone-5-propanoate + H2O = N-formimidoyl-L-glutamate. The protein operates within amino-acid degradation; L-histidine degradation into L-glutamate; N-formimidoyl-L-glutamate from L-histidine: step 3/3. Its function is as follows. Catalyzes the hydrolytic cleavage of the carbon-nitrogen bond in imidazolone-5-propanoate to yield N-formimidoyl-L-glutamate. It is the third step in the universal histidine degradation pathway. This is Imidazolonepropionase from Shewanella loihica (strain ATCC BAA-1088 / PV-4).